Here is a 140-residue protein sequence, read N- to C-terminus: uncharacterized protein (140 aa).

An N-terminal signal peptide occupies residues methionine 1–alanine 22.

This is an uncharacterized protein from Archaeoglobus fulgidus (strain ATCC 49558 / DSM 4304 / JCM 9628 / NBRC 100126 / VC-16).